The primary structure comprises 726 residues: NHL repeat-containing protein 2 (726 aa).

6 NHL repeats span residues 212–254 (KLYK…VWKN), 265–307 (NPGR…IDLE), 335–369 (ISSP…IWAL), 409–439 (FAQP…VRTV), 461–505 (AFGD…VDPK), and 518–562 (ASNM…LDLE).

Monomer.

It is found in the cytoplasm. Its subcellular location is the cytosol. Its function is as follows. Required for normal embryonic development. This Bos taurus (Bovine) protein is NHL repeat-containing protein 2 (NHLRC2).